The sequence spans 381 residues: Chaperone protein DnaJ (381 aa).

Residues 5-70 (DYYEVLGIER…EKRSAYDQFG (66 aa)) form the J domain. The CR-type zinc finger occupies 137 to 215 (GTTVDIRVPR…CHGEGRVRET (79 aa)). Zn(2+) contacts are provided by Cys-150, Cys-153, Cys-167, Cys-170, Cys-189, Cys-192, Cys-203, and Cys-206. CXXCXGXG motif repeat units follow at residues 150 to 157 (CEHCDGDG), 167 to 174 (CPTCHGQG), 189 to 196 (CPTCHGAG), and 203 to 210 (CRKCHGEG).

It belongs to the DnaJ family. Homodimer. The cofactor is Zn(2+).

The protein resides in the cytoplasm. Participates actively in the response to hyperosmotic and heat shock by preventing the aggregation of stress-denatured proteins and by disaggregating proteins, also in an autonomous, DnaK-independent fashion. Unfolded proteins bind initially to DnaJ; upon interaction with the DnaJ-bound protein, DnaK hydrolyzes its bound ATP, resulting in the formation of a stable complex. GrpE releases ADP from DnaK; ATP binding to DnaK triggers the release of the substrate protein, thus completing the reaction cycle. Several rounds of ATP-dependent interactions between DnaJ, DnaK and GrpE are required for fully efficient folding. Also involved, together with DnaK and GrpE, in the DNA replication of plasmids through activation of initiation proteins. This is Chaperone protein DnaJ from Chromohalobacter salexigens (strain ATCC BAA-138 / DSM 3043 / CIP 106854 / NCIMB 13768 / 1H11).